The primary structure comprises 446 residues: tRNA-2-methylthio-N(6)-dimethylallyladenosine synthase (446 aa).

The MTTase N-terminal domain occupies K8–A124. Positions 17, 53, 87, 160, 164, and 167 each coordinate [4Fe-4S] cluster. Residues R146–A378 enclose the Radical SAM core domain. The region spanning A381 to E442 is the TRAM domain.

Belongs to the methylthiotransferase family. MiaB subfamily. In terms of assembly, monomer. The cofactor is [4Fe-4S] cluster.

The protein resides in the cytoplasm. The enzyme catalyses N(6)-dimethylallyladenosine(37) in tRNA + (sulfur carrier)-SH + AH2 + 2 S-adenosyl-L-methionine = 2-methylsulfanyl-N(6)-dimethylallyladenosine(37) in tRNA + (sulfur carrier)-H + 5'-deoxyadenosine + L-methionine + A + S-adenosyl-L-homocysteine + 2 H(+). Functionally, catalyzes the methylthiolation of N6-(dimethylallyl)adenosine (i(6)A), leading to the formation of 2-methylthio-N6-(dimethylallyl)adenosine (ms(2)i(6)A) at position 37 in tRNAs that read codons beginning with uridine. This Erythrobacter litoralis (strain HTCC2594) protein is tRNA-2-methylthio-N(6)-dimethylallyladenosine synthase.